We begin with the raw amino-acid sequence, 315 residues long: Calumenin (315 aa).

The first 19 residues, 1–19 (MDLRQFLMCLSLCTAFALS), serve as a signal peptide directing secretion. Serine 44 is subject to Phosphoserine. Tyrosine 47 carries the phosphotyrosine modification. A Phosphothreonine modification is found at threonine 65. 6 consecutive EF-hand domains span residues 68 to 103 (ESKERLGKIVSKIDGDKDGFVTVDELKDWIKFAQKR), 104 to 139 (WIYEDVERQWKGHDLNEDGLVSWEEYKNATYGYVLD), 151 to 186 (QMMVRDERRFKMADKDGDLIATKEEFTAFLHPEEYD), 188 to 223 (MKDIVVQETMEDIDKNADGFIDLEEYIGDMYSHDGN), 229 to 264 (WVKTEREQFVEFRDKNRDGKMDKEETKDWILPSDYD), and 265 to 300 (HAEAEARHLVYESDQNKDGKLTKEEIVDKYDLFVGS). Phosphoserine; by FAM20C is present on serine 69. Ca(2+)-binding residues include aspartate 81, aspartate 83, aspartate 85, glutamate 92, aspartate 117, asparagine 119, aspartate 121, and glutamate 128. Asparagine 131 carries an N-linked (GlcNAc...) (complex) asparagine glycan. Aspartate 164 contacts Ca(2+). Lysine 165 is subject to N6-acetyllysine. Residues aspartate 166, aspartate 168, glutamate 175, aspartate 201, asparagine 203, aspartate 205, glutamate 212, aspartate 242, asparagine 244, aspartate 246, lysine 248, and glutamate 253 each coordinate Ca(2+). Phosphothreonine is present on threonine 254. Residues serine 261 and serine 277 each carry the phosphoserine modification. The Ca(2+) site is built by aspartate 278, asparagine 280, aspartate 282, lysine 284, and glutamate 289. A Prevents secretion from ER motif is present at residues 312–315 (HDEF).

The protein belongs to the CREC family. As to quaternary structure, interacts with GGCX. Ubiquitously expressed. Expressed at high levels in heart, placenta and skeletal muscle, at lower levels in lung, kidney and pancreas and at very low levels in brain and liver.

Its subcellular location is the endoplasmic reticulum membrane. The protein localises to the golgi apparatus. It is found in the secreted. It localises to the melanosome. The protein resides in the sarcoplasmic reticulum lumen. Involved in regulation of vitamin K-dependent carboxylation of multiple N-terminal glutamate residues. Seems to inhibit gamma-carboxylase GGCX. Binds 7 calcium ions with a low affinity. The protein is Calumenin (CALU) of Homo sapiens (Human).